A 495-amino-acid chain; its full sequence is Regulator of G-protein signaling 7 (495 aa).

The region spanning 37–112 (EKNGIPIRTV…DDGTFYRFQT (76 aa)) is the DEP domain. Phosphoserine is present on residues S229 and S241. The segment at 235 to 256 (NDIRSHSPTHTPTPETKPPTED) is disordered. T243 carries the phosphothreonine modification. Residues 255–316 (EDELQQQIKY…LSDDTTFWEL (62 aa)) form the G protein gamma domain. The 116-residue stretch at 333–448 (GMDEALKDPV…IRSSAYQELL (116 aa)) folds into the RGS domain. S434 bears the Phosphoserine mark.

In terms of assembly, interacts with GNB5, forming the RGS7-GNB5 complex. Interacts with GPR158; promotes the GTPase activator activity of the RGS7-GNB5 complex in absence of glycine, in contrast GTPase activator activity of the RGS7-GNB5 complex is inhibited in presence of glycine. Interacts with GPR179. Interacts with PKD1; this prevents rapid proteasomal degradation. Interacts with RGS7BP, leading to regulate the subcellular location of the heterodimer formed with GNB5. Interacts (phosphorylated form) with 14-3-3 protein YWHAQ. Interacts with SNAPIN. Interacts with GNAI1. Interacts with GNAO1, GNAI3 and GNAZ. Palmitoylated. In terms of processing, ubiquitinated, leading to rapid proteasomal degradation. Post-translationally, phosphorylation and subsequent interaction with 14-3-3 proteins inhibits GAP activity.

Its subcellular location is the cytoplasm. The protein resides in the cytosol. It is found in the cell membrane. It localises to the membrane. GTPase activator component of the RGS7-GNB5 complex that regulates G protein-coupled receptor signaling cascades. The RGS7-GNB5 complex acts as an inhibitor signal transduction by promoting the GTPase activity of G protein alpha subunits, such as GNAO1, thereby driving them into their inactive GDP-bound form. May play a role in synaptic vesicle exocytosis. Glycine-dependent regulation of the RGS7-GNB5 complex by GPR158 affects mood and cognition via its ability to regulate neuronal excitability in L2/L3 pyramidal neurons of the prefrontal cortex. Modulates the activity of potassium channels that are activated by GNAO1 in response to muscarinic acetylcholine receptor M2/CHRM2 signaling. The protein is Regulator of G-protein signaling 7 (RGS7) of Homo sapiens (Human).